The primary structure comprises 296 residues: Phosphatidylglycerol--prolipoprotein diacylglyceryl transferase (296 aa).

4 helical membrane passes run 10–30, 57–77, 92–112, and 119–139; these read IAFS…LAAF, LLFY…MLFY, VWEG…ACWL, and LHFF…LGFG. Position 140 (R140) interacts with a 1,2-diacyl-sn-glycero-3-phospho-(1'-sn-glycerol). The next 3 membrane-spanning stretches (helical) occupy residues 194-214, 220-240, and 254-274; these read QLYE…TFSM, YAVS…VEFV, and WLTM…VLLA.

The protein belongs to the Lgt family.

It is found in the cell inner membrane. The enzyme catalyses L-cysteinyl-[prolipoprotein] + a 1,2-diacyl-sn-glycero-3-phospho-(1'-sn-glycerol) = an S-1,2-diacyl-sn-glyceryl-L-cysteinyl-[prolipoprotein] + sn-glycerol 1-phosphate + H(+). Its pathway is protein modification; lipoprotein biosynthesis (diacylglyceryl transfer). Catalyzes the transfer of the diacylglyceryl group from phosphatidylglycerol to the sulfhydryl group of the N-terminal cysteine of a prolipoprotein, the first step in the formation of mature lipoproteins. The protein is Phosphatidylglycerol--prolipoprotein diacylglyceryl transferase of Xanthomonas axonopodis pv. citri (strain 306).